The chain runs to 38 residues: Large ribosomal subunit protein bL36 (38 aa).

It belongs to the bacterial ribosomal protein bL36 family.

The polypeptide is Large ribosomal subunit protein bL36 (Cupriavidus metallidurans (strain ATCC 43123 / DSM 2839 / NBRC 102507 / CH34) (Ralstonia metallidurans)).